Here is a 375-residue protein sequence, read N- to C-terminus: E3 ubiquitin-protein ligase RNF34 (375 aa).

The segment at 56-107 (EGPNIVCKACGLSFSVFRKKHVCCDCKKDFCSVCSVLQENLRRCSTCHLLQE) adopts an FYVE-type zinc-finger fold. The SAP 1 domain maps to 115–134 (LMRLKVKDLRQYLILRNIPI). Serine 169 carries the phosphoserine modification. The segment at 202 to 250 (RTLGSGALAQEPSEIASANTEDDEDDDDDDDDDDDDDEENLEDRTPGLT) is disordered. Residues 221–242 (TEDDEDDDDDDDDDDDDDEENL) are compositionally biased toward acidic residues. Residues serine 257 and serine 259 each carry the phosphoserine modification. The SAP 2 domain maps to 267–281 (VEGMSVRQLKEILAR). The RING-type zinc finger occupies 328–363 (CRICMDAVIDCVLLECGHMVTCTKCGKRMSECPICR).

In terms of assembly, interacts with CASP8 and CASP10. Interacts with p53/TP53; involved in p53/TP53 ubiquitination. Interacts (via RING-type zinc finger) with MDM2; the interaction stabilizes MDM2. Interacts (via RING-type zinc finger) with PPARGC1A. Interacts with NOD1. Autoubiquitinated (in vitro). In terms of processing, proteolytically cleaved by caspases upon induction of apoptosis by TNF.

It localises to the cell membrane. Its subcellular location is the endomembrane system. The protein resides in the nucleus. It is found in the nucleus speckle. The protein localises to the cytoplasm. It localises to the cytosol. The enzyme catalyses S-ubiquitinyl-[E2 ubiquitin-conjugating enzyme]-L-cysteine + [acceptor protein]-L-lysine = [E2 ubiquitin-conjugating enzyme]-L-cysteine + N(6)-ubiquitinyl-[acceptor protein]-L-lysine.. It functions in the pathway protein modification; protein ubiquitination. In terms of biological role, E3 ubiquitin-protein ligase that regulates several biological processes through the ubiquitin-mediated proteasomal degradation of various target proteins. Ubiquitinates the caspases CASP8 and CASP10, promoting their proteasomal degradation, to negatively regulate cell death downstream of death domain receptors in the extrinsic pathway of apoptosis. May mediate 'Lys-48'-linked polyubiquitination of RIPK1 and its subsequent proteasomal degradation thereby indirectly regulating the tumor necrosis factor-mediated signaling pathway. Negatively regulates p53/TP53 through its direct ubiquitination and targeting to proteasomal degradation. Indirectly, may also negatively regulate p53/TP53 through ubiquitination and degradation of SFN. Mediates PPARGC1A proteasomal degradation probably through ubiquitination thereby indirectly regulating the metabolism of brown fat cells. Possibly involved in innate immunity, through 'Lys-48'-linked polyubiquitination of NOD1 and its subsequent proteasomal degradation. The polypeptide is E3 ubiquitin-protein ligase RNF34 (RNF34) (Bos taurus (Bovine)).